The chain runs to 346 residues: [LysW]-lysine/[LysW]-ornithine hydrolase (346 aa).

Position 68 (His-68) interacts with Zn(2+). The active site involves Asp-70. Position 92 (Asp-92) interacts with Zn(2+). Glu-122 serves as the catalytic Proton acceptor. The Zn(2+) site is built by Glu-123, Glu-146, and His-317.

Belongs to the peptidase M20A family. LysK subfamily. The cofactor is Zn(2+). It depends on Co(2+) as a cofactor.

It is found in the cytoplasm. It catalyses the reaction [amino-group carrier protein]-C-terminal-gamma-(L-lysyl)-L-glutamate + H2O = [amino-group carrier protein]-C-terminal-L-glutamate + L-lysine. It carries out the reaction [amino-group carrier protein]-C-terminal-gamma-(L-ornithyl)-L-glutamate + H2O = [amino-group carrier protein]-C-terminal-L-glutamate + L-ornithine. Its pathway is amino-acid biosynthesis; L-lysine biosynthesis via AAA pathway; L-lysine from L-alpha-aminoadipate (Thermus route): step 5/5. It participates in amino-acid biosynthesis; L-arginine biosynthesis. Its function is as follows. Catalyzes the release of L-lysine from [LysW]-gamma-L-lysine and the release of L-ornithine from [LysW]-L-ornithine. The protein is [LysW]-lysine/[LysW]-ornithine hydrolase of Saccharolobus islandicus (strain M.16.4 / Kamchatka #3) (Sulfolobus islandicus).